The primary structure comprises 105 residues: Thioredoxin (105 aa).

One can recognise a Thioredoxin domain in the interval 2–105 (VKQIESKYAF…KLEATINELI (104 aa)). K3 carries the N6-acetyllysine modification. An N6-succinyllysine modification is found at K8. Active-site nucleophile residues include C32 and C35. C32 and C35 are disulfide-bonded. K39 is modified (N6-acetyllysine). 2 positions are modified to S-nitrosocysteine: C62 and C69. Position 73 is an S-nitrosocysteine; alternate (C73). An N6-acetyllysine; alternate modification is found at K94. An N6-succinyllysine; alternate modification is found at K94.

It belongs to the thioredoxin family. In terms of assembly, homodimer; disulfide-linked. Interacts with TXNIP through the redox-active site. Interacts with MAP3K5 and CASP3. Interacts with APEX1; the interaction stimulates the FOS/JUN AP-1 DNA-binding activity in a redox-dependent manner. In terms of processing, in the fully reduced protein, both Cys-69 and Cys-73 are nitrosylated in response to nitric oxide (NO). When two disulfide bonds are present in the protein, only Cys-73 is nitrosylated. Cys-73 can serve as donor for nitrosylation of target proteins. Erythrocytes.

It is found in the nucleus. The protein localises to the cytoplasm. Its subcellular location is the secreted. In terms of biological role, participates in various redox reactions through the reversible oxidation of its active center dithiol to a disulfide and catalyzes dithiol-disulfide exchange reactions. Plays a role in the reversible S-nitrosylation of cysteine residues in target proteins, and thereby contributes to the response to intracellular nitric oxide. Nitrosylates the active site Cys of CASP3 in response to nitric oxide (NO), and thereby inhibits caspase-3 activity. Induces the FOS/JUN AP-1 DNA binding activity in ionizing radiation (IR) cells through its oxidation/reduction status and stimulates AP-1 transcriptional activity. This is Thioredoxin (TXN) from Sus scrofa (Pig).